Here is a 111-residue protein sequence, read N- to C-terminus: Photosystem II reaction center Psb28 protein (111 aa).

Belongs to the Psb28 family. As to quaternary structure, part of the photosystem II complex.

The protein localises to the cellular thylakoid membrane. This is Photosystem II reaction center Psb28 protein from Nostoc sp. (strain PCC 7120 / SAG 25.82 / UTEX 2576).